Consider the following 369-residue polypeptide: Choline-phosphate cytidylyltransferase B (369 aa).

The interval 1–27 is disordered; sequence MPVLTTDAESETGIPKSLSNEPPSETM. I84, F85, H92, and K122 together coordinate CTP. Residues K122 and W151 each coordinate phosphocholine. H168, D169, Y173, Q195, R196, T197, and I200 together coordinate CTP. The segment at 309 to 369 is disordered; sequence RMLQALSPKQ…SMSEGDEDEK (61 aa). Phosphoserine occurs at positions 315, 319, 322, 323, 329, 331, and 335. Low complexity predominate over residues 319–339; that stretch reads SPVSSPTRSRSPSRSPSPTFS. T345 is subject to Phosphothreonine. 6 positions are modified to phosphoserine: S346, S349, S350, S355, S360, and S362. Residues 351–362 are compositionally biased toward low complexity; that stretch reads PKAASASISSMS.

Belongs to the cytidylyltransferase family. Homodimer. In terms of tissue distribution, highly expressed in brain (at protein level). Expressed in liver (at protein level). Expressed at lower levels in lung and gonads. Expressed in brain (at protein level). Expressed at lower levels in lung and gonads.

It localises to the endoplasmic reticulum. It is found in the cytoplasm. It catalyses the reaction phosphocholine + CTP + H(+) = CDP-choline + diphosphate. It participates in phospholipid metabolism; phosphatidylcholine biosynthesis; phosphatidylcholine from phosphocholine: step 1/2. Its function is as follows. Catalyzes the key rate-limiting step in the CDP-choline pathway for phosphatidylcholine biosynthesis. Plays an important role in ovary maturation and the maintenance of sperm production. Functionally, catalyzes the key rate-limiting step in the CDP-choline pathway for phosphatidylcholine biosynthesis. The sequence is that of Choline-phosphate cytidylyltransferase B (Pcyt1b) from Mus musculus (Mouse).